The following is a 164-amino-acid chain: Interferon gamma (164 aa).

A signal peptide spans 1-19 (MTCQTYNLFVLSVIMIYYG). N-linked (GlcNAc...) asparagine glycans are attached at residues Asn-42 and Asn-61.

It belongs to the type II (or gamma) interferon family. Homodimer.

It is found in the secreted. Produced by lymphocytes activated by specific antigens or mitogens. IFN-gamma, in addition to having antiviral activity, has important immunoregulatory functions. It is a potent activator of macrophages, it has antiproliferative effects on transformed cells and it can potentiate the antiviral and antitumor effects of the type I interferons. The protein is Interferon gamma (IFNG) of Gallus gallus (Chicken).